Reading from the N-terminus, the 118-residue chain is Co-chaperonin GroES (118 aa).

The protein belongs to the GroES chaperonin family. In terms of assembly, heptamer of 7 subunits arranged in a ring. Interacts with the chaperonin GroEL.

Its subcellular location is the cytoplasm. In terms of biological role, together with the chaperonin GroEL, plays an essential role in assisting protein folding. The GroEL-GroES system forms a nano-cage that allows encapsulation of the non-native substrate proteins and provides a physical environment optimized to promote and accelerate protein folding. GroES binds to the apical surface of the GroEL ring, thereby capping the opening of the GroEL channel. In Helicobacter pylori (strain G27), this protein is Co-chaperonin GroES.